Reading from the N-terminus, the 309-residue chain is HPr kinase/phosphorylase (309 aa).

Residues histidine 138 and lysine 159 contribute to the active site. 153-160 contacts ATP; that stretch reads GQSGVGKS. Serine 160 contributes to the Mg(2+) binding site. The active-site Proton acceptor; for phosphorylation activity. Proton donor; for dephosphorylation activity is aspartate 177. Residues 201-210 form an important for the catalytic mechanism of both phosphorylation and dephosphorylation region; that stretch reads LEIRGLGIIN. Residue glutamate 202 coordinates Mg(2+). The active site involves arginine 243. The segment at 264–269 is important for the catalytic mechanism of dephosphorylation; that stretch reads PVRPGR.

It belongs to the HPrK/P family. In terms of assembly, homohexamer. Mg(2+) serves as cofactor.

It carries out the reaction [HPr protein]-L-serine + ATP = [HPr protein]-O-phospho-L-serine + ADP + H(+). It catalyses the reaction [HPr protein]-O-phospho-L-serine + phosphate + H(+) = [HPr protein]-L-serine + diphosphate. Functionally, catalyzes the ATP- as well as the pyrophosphate-dependent phosphorylation of a specific serine residue in HPr, a phosphocarrier protein of the phosphoenolpyruvate-dependent sugar phosphotransferase system (PTS). HprK/P also catalyzes the pyrophosphate-producing, inorganic phosphate-dependent dephosphorylation (phosphorolysis) of seryl-phosphorylated HPr (P-Ser-HPr). The two antagonistic activities of HprK/P are regulated by several intracellular metabolites, which change their concentration in response to the absence or presence of rapidly metabolisable carbon sources (glucose, fructose, etc.) in the growth medium. Also phosphorylates/dephosphorylates the HPr-like catabolite repression protein crh on a specific serine residue. Therefore, by controlling the phosphorylation state of HPr and crh, HPrK/P is a sensor enzyme that plays a major role in the regulation of carbon metabolism and sugar transport: it mediates carbon catabolite repression (CCR), and regulates PTS-catalyzed carbohydrate uptake and inducer exclusion. The polypeptide is HPr kinase/phosphorylase (Bacillus cytotoxicus (strain DSM 22905 / CIP 110041 / 391-98 / NVH 391-98)).